The sequence spans 424 residues: Probable methyltransferase EP424R (424 aa).

Residues 104–316 (QIVTNAWLKM…TYIVGKNRLR (213 aa)) form the Adrift-type SAM-dependent 2'-O-MTase domain. Gly136 and Asp229 together coordinate S-adenosyl-L-methionine. The active-site Proton acceptor is Lys269.

It is found in the virion. The polypeptide is Probable methyltransferase EP424R (African swine fever virus (strain Badajoz 1971 Vero-adapted) (Ba71V)).